We begin with the raw amino-acid sequence, 646 residues long: ATP-dependent zinc metalloprotease FtsH (646 aa).

The Cytoplasmic portion of the chain corresponds to 1–4 (MTRS). Residues 5–25 (LLWQMVIVLGAILMVNYVLTT) form a helical membrane-spanning segment. Residues 26–120 (LTPQTQEPVV…VRPESKPSPW (95 aa)) are Periplasmic-facing. The chain crosses the membrane as a helical span at residues 121-141 (ATAMIYMLPWLLIVGVWWFVI). Topologically, residues 142-646 (KGMRTRQGPG…GELAGGAVEG (505 aa)) are cytoplasmic. Position 216–223 (216–223 (GPPGTGKT)) interacts with ATP. H437 contributes to the Zn(2+) binding site. The active site involves E438. 2 residues coordinate Zn(2+): H441 and D513.

The protein in the central section; belongs to the AAA ATPase family. In the C-terminal section; belongs to the peptidase M41 family. Homohexamer. The cofactor is Zn(2+).

The protein resides in the cell inner membrane. Acts as a processive, ATP-dependent zinc metallopeptidase for both cytoplasmic and membrane proteins. Plays a role in the quality control of integral membrane proteins. This chain is ATP-dependent zinc metalloprotease FtsH, found in Syntrophotalea carbinolica (strain DSM 2380 / NBRC 103641 / GraBd1) (Pelobacter carbinolicus).